Reading from the N-terminus, the 435-residue chain is Light-independent protochlorophyllide reductase subunit N (435 aa).

[4Fe-4S] cluster-binding residues include Cys-23, Cys-48, and Cys-108.

It belongs to the BchN/ChlN family. Protochlorophyllide reductase is composed of three subunits; ChlL, ChlN and ChlB. Forms a heterotetramer of two ChlB and two ChlN subunits. [4Fe-4S] cluster is required as a cofactor.

It localises to the plastid. The protein localises to the chloroplast. The catalysed reaction is chlorophyllide a + oxidized 2[4Fe-4S]-[ferredoxin] + 2 ADP + 2 phosphate = protochlorophyllide a + reduced 2[4Fe-4S]-[ferredoxin] + 2 ATP + 2 H2O. The protein operates within porphyrin-containing compound metabolism; chlorophyll biosynthesis (light-independent). In terms of biological role, component of the dark-operative protochlorophyllide reductase (DPOR) that uses Mg-ATP and reduced ferredoxin to reduce ring D of protochlorophyllide (Pchlide) to form chlorophyllide a (Chlide). This reaction is light-independent. The NB-protein (ChlN-ChlB) is the catalytic component of the complex. This chain is Light-independent protochlorophyllide reductase subunit N, found in Auxenochlorella protothecoides (Green microalga).